We begin with the raw amino-acid sequence, 225 residues long: Protein-L-isoaspartate O-methyltransferase 2 (225 aa).

S73 is a catalytic residue.

Belongs to the methyltransferase superfamily. L-isoaspartyl/D-aspartyl protein methyltransferase family.

The protein localises to the cytoplasm. It catalyses the reaction [protein]-L-isoaspartate + S-adenosyl-L-methionine = [protein]-L-isoaspartate alpha-methyl ester + S-adenosyl-L-homocysteine. Functionally, catalyzes the methyl esterification of L-isoaspartyl residues in peptides and proteins that result from spontaneous decomposition of normal L-aspartyl and L-asparaginyl residues. It plays a role in the repair and/or degradation of damaged proteins. This chain is Protein-L-isoaspartate O-methyltransferase 2, found in Pelobacter propionicus (strain DSM 2379 / NBRC 103807 / OttBd1).